Consider the following 582-residue polypeptide: Spermatogenesis-associated protein 7 homolog (582 aa).

Disordered regions lie at residues 167–192 (LMSG…CDRR) and 251–289 (RKDF…EVNI). Composition is skewed to polar residues over residues 169–181 (SGTQ…SPSR) and 262–274 (ETQT…NSEL).

Found in a complex with CFAP410, NEK1 and SPATA7. Interacts with NEK1. Interacts with RPGRIP1. Interacts with RPGR. Interacts with NPHP4. Interacts with NPHP1. Interacts with AHI1. In terms of tissue distribution, expressed in the retina (at protein level). Expressed in the choroid region and retinal pigment endothelium, within the photoreceptor layer (at protein level).

It localises to the cytoplasm. Its subcellular location is the cytoskeleton. It is found in the cilium axoneme. The protein resides in the cilium basal body. The protein localises to the cell projection. It localises to the cilium. Its subcellular location is the photoreceptor outer segment. In terms of biological role, involved in the maintenance of both rod and cone photoreceptor cells. Required for photoreceptor-specific localization of proximal connecting cilium (CC) proteins RPGR, AHI1, NPHP1, NPHP4, and RPGRIP1 at the distal CC, a photoreceptor-specific extension of the primary cilium transition zone. Maintenance of protein localization at the photoreceptor-specific distal CC is essential for normal microtubule stability and to prevent photoreceptor degeneration. The sequence is that of Spermatogenesis-associated protein 7 homolog (Spata7) from Mus musculus (Mouse).